Here is a 306-residue protein sequence, read N- to C-terminus: Elongation factor Ts (306 aa).

Positions 80–83 are involved in Mg(2+) ion dislocation from EF-Tu; sequence TDFV.

It belongs to the EF-Ts family.

The protein localises to the cytoplasm. Its function is as follows. Associates with the EF-Tu.GDP complex and induces the exchange of GDP to GTP. It remains bound to the aminoacyl-tRNA.EF-Tu.GTP complex up to the GTP hydrolysis stage on the ribosome. The protein is Elongation factor Ts of Clostridium kluyveri (strain NBRC 12016).